The primary structure comprises 515 residues: Putative asparagine synthetase [glutamine-hydrolyzing] 2 (515 aa).

Residue Cys2 is the For GATase activity of the active site. The Glutamine amidotransferase type-2 domain maps to 2-229; sequence CGINGIIRFG…ARQNLIFDLD (228 aa). L-glutamine-binding positions include 52–56, 92–94, and Asp114; these read RLAIL and NGE. ATP-binding positions include Ile306 and 378-379; that span reads SG.

It belongs to the asparagine synthetase family.

It carries out the reaction L-aspartate + L-glutamine + ATP + H2O = L-asparagine + L-glutamate + AMP + diphosphate + H(+). The protein operates within amino-acid biosynthesis; L-asparagine biosynthesis; L-asparagine from L-aspartate (L-Gln route): step 1/1. This is Putative asparagine synthetase [glutamine-hydrolyzing] 2 from Methanocaldococcus jannaschii (strain ATCC 43067 / DSM 2661 / JAL-1 / JCM 10045 / NBRC 100440) (Methanococcus jannaschii).